The primary structure comprises 222 residues: N-(5'-phosphoribosyl)anthranilate isomerase (222 aa).

It belongs to the TrpF family.

It catalyses the reaction N-(5-phospho-beta-D-ribosyl)anthranilate = 1-(2-carboxyphenylamino)-1-deoxy-D-ribulose 5-phosphate. The protein operates within amino-acid biosynthesis; L-tryptophan biosynthesis; L-tryptophan from chorismate: step 3/5. In Xanthomonas euvesicatoria pv. vesicatoria (strain 85-10) (Xanthomonas campestris pv. vesicatoria), this protein is N-(5'-phosphoribosyl)anthranilate isomerase.